Reading from the N-terminus, the 374-residue chain is MEPDRQTDIAALDSTLTTVERVLDVEGLRTRIEKLEHEASDPKLWDDQVRAQRVTSELSHAQGELRRIEELRRRLDDLPVLYELAAEERAAAAASGMEAFAEADAELKALRVDIEATEVRTLLSGEYDEREALITIRSGAGGVDAADWAEMLMRMYIRWAEQHKYGVEVLDTSYAEEAGVKSATFAVHAPFAYGTLASEQGTHRLVRISPFDNQSRRQTSFAEVEVLPVVEITDHIDIPEGDVRVDVYRSSGPGGQSVNTTDSAVRLTHVPTGLVVTCQNEKSQLQNKVSAMRVLQAKLLERKRLEERAELDALKGRGGSSWGNQIRSYVLHPYQMVKDLRNEYEVGNPTAVLDGDIDGFLEAGIRWRNRRDIS.

Residue Gln-256 is modified to N5-methylglutamine.

This sequence belongs to the prokaryotic/mitochondrial release factor family. In terms of processing, methylated by PrmC. Methylation increases the termination efficiency of RF2.

The protein localises to the cytoplasm. In terms of biological role, peptide chain release factor 2 directs the termination of translation in response to the peptide chain termination codons UGA and UAA. The sequence is that of Peptide chain release factor 2 from Mycobacterium leprae (strain Br4923).